We begin with the raw amino-acid sequence, 155 residues long: Small ribosomal subunit protein uS7cz/uS7cy (155 aa).

Belongs to the universal ribosomal protein uS7 family. In terms of assembly, part of the 30S ribosomal subunit.

It localises to the plastid. Its subcellular location is the chloroplast. In terms of biological role, one of the primary rRNA binding proteins, it binds directly to 16S rRNA where it nucleates assembly of the head domain of the 30S subunit. In Jasminum nudiflorum (Winter jasmine), this protein is Small ribosomal subunit protein uS7cz/uS7cy (rps7-A).